The chain runs to 122 residues: Cytochrome b-c1 complex subunit 7-2, mitochondrial (122 aa).

It belongs to the UQCRB/QCR7 family. In terms of assembly, component of the ubiquinol-cytochrome c oxidoreductase (cytochrome b-c1 complex, complex III, CIII), a multisubunit enzyme composed of 10 subunits. The complex is composed of 3 respiratory subunits cytochrome b (MT-CYB), cytochrome c1 (CYC1-1 or CYC1-2) and Rieske protein (UCR1-1 or UCR1-2), 2 core protein subunits MPPalpha1 (or MPPalpha2) and MPPB, and 5 low-molecular weight protein subunits QCR7-1 (or QCR7-2), UCRQ-1 (or UCRQ-2), QCR9, UCRY and probably QCR6-1 (or QCR6-2). The complex exists as an obligatory dimer and forms supercomplexes (SCs) in the inner mitochondrial membrane with NADH-ubiquinone oxidoreductase (complex I, CI), resulting in different assemblies (supercomplexes SCI(1)III(2) and SCI(2)III(4)).

The protein localises to the mitochondrion inner membrane. Functionally, component of the ubiquinol-cytochrome c oxidoreductase, a multisubunit transmembrane complex that is part of the mitochondrial electron transport chain which drives oxidative phosphorylation. The respiratory chain contains 3 multisubunit complexes succinate dehydrogenase (complex II, CII), ubiquinol-cytochrome c oxidoreductase (cytochrome b-c1 complex, complex III, CIII) and cytochrome c oxidase (complex IV, CIV), that cooperate to transfer electrons derived from NADH and succinate to molecular oxygen, creating an electrochemical gradient over the inner membrane that drives transmembrane transport and the ATP synthase. The cytochrome b-c1 complex catalyzes electron transfer from ubiquinol to cytochrome c, linking this redox reaction to translocation of protons across the mitochondrial inner membrane, with protons being carried across the membrane as hydrogens on the quinol. In the process called Q cycle, 2 protons are consumed from the matrix, 4 protons are released into the intermembrane space and 2 electrons are passed to cytochrome c. This chain is Cytochrome b-c1 complex subunit 7-2, mitochondrial (QCR7-2), found in Arabidopsis thaliana (Mouse-ear cress).